The primary structure comprises 155 residues: MLNQQKVVEIYTDGACSGNPGVGGWGAILRWNGHERELYSGEVQTTNNRMELMAAICALKVLKEACSVDLYTDSVYVRNGISLWLERWKMNNWRTTSKKTVKNIELWKALEDVCSLHTIRWHWVKGHAGHPDNERADALARKAITEYRKNGYFSA.

The region spanning 4–145 is the RNase H type-1 domain; it reads QQKVVEIYTD…ADALARKAIT (142 aa). Residues D13, E51, D73, and D137 each contribute to the Mg(2+) site.

This sequence belongs to the RNase H family. In terms of assembly, monomer. Mg(2+) is required as a cofactor.

The protein localises to the cytoplasm. The catalysed reaction is Endonucleolytic cleavage to 5'-phosphomonoester.. In terms of biological role, endonuclease that specifically degrades the RNA of RNA-DNA hybrids. The chain is Ribonuclease H from Bartonella quintana (strain Toulouse) (Rochalimaea quintana).